The primary structure comprises 130 residues: Succinate dehydrogenase assembly factor 3, mitochondrial (130 aa).

Residues 1–8 constitute a mitochondrion transit peptide; sequence MRPSLLRL.

Belongs to the complex I LYR family. SDHAF3 subfamily. In terms of assembly, interacts with the iron-sulfur protein subunit within the SDH catalytic dimer.

The protein localises to the mitochondrion matrix. Its function is as follows. Plays an essential role in the assembly of succinate dehydrogenase (SDH), an enzyme complex (also referred to as respiratory complex II) that is a component of both the tricarboxylic acid (TCA) cycle and the mitochondrial electron transport chain, and which couples the oxidation of succinate to fumarate with the reduction of ubiquinone (coenzyme Q) to ubiquinol. Promotes maturation of the iron-sulfur protein subunit of the SDH catalytic dimer, protecting it from the deleterious effects of oxidants. May act together with SDHAF1. This chain is Succinate dehydrogenase assembly factor 3, mitochondrial, found in Gibberella zeae (strain ATCC MYA-4620 / CBS 123657 / FGSC 9075 / NRRL 31084 / PH-1) (Wheat head blight fungus).